The sequence spans 763 residues: 5-methyltetrahydropteroyltriglutamate--homocysteine methyltransferase (763 aa).

Residues arginine 16–lysine 19 and lysine 121 contribute to the 5-methyltetrahydropteroyltri-L-glutamate site. L-homocysteine is bound by residues isoleucine 440 to serine 442 and glutamate 493. Residues isoleucine 440–serine 442 and glutamate 493 each bind L-methionine. 5-methyltetrahydropteroyltri-L-glutamate-binding positions include arginine 524–cysteine 525 and tryptophan 570. Aspartate 608 is an L-homocysteine binding site. Aspartate 608 lines the L-methionine pocket. Glutamate 614 contributes to the 5-methyltetrahydropteroyltri-L-glutamate binding site. Zn(2+) is bound by residues histidine 650, cysteine 652, and glutamate 674. The active-site Proton donor is the histidine 703. Cysteine 735 lines the Zn(2+) pocket.

This sequence belongs to the vitamin-B12 independent methionine synthase family. Zn(2+) serves as cofactor.

The enzyme catalyses 5-methyltetrahydropteroyltri-L-glutamate + L-homocysteine = tetrahydropteroyltri-L-glutamate + L-methionine. It participates in amino-acid biosynthesis; L-methionine biosynthesis via de novo pathway; L-methionine from L-homocysteine (MetE route): step 1/1. Catalyzes the transfer of a methyl group from 5-methyltetrahydrofolate to homocysteine resulting in methionine formation. This Paraburkholderia phymatum (strain DSM 17167 / CIP 108236 / LMG 21445 / STM815) (Burkholderia phymatum) protein is 5-methyltetrahydropteroyltriglutamate--homocysteine methyltransferase.